We begin with the raw amino-acid sequence, 309 residues long: Taste receptor type 2 member 20 (309 aa).

At 1 to 6 the chain is on the extracellular side; sequence MMSFLH. Residues 7–27 form a helical membrane-spanning segment; sequence IVFSILVVVAFILGNFANGFI. The Cytoplasmic portion of the chain corresponds to 28–46; that stretch reads ALINFIAWVKRQKISSADQ. The chain crosses the membrane as a helical span at residues 47-67; sequence IIAALAVSRVGLLWVILLHWY. Residues 68–79 are Extracellular-facing; it reads STVLNPTSSNLK. The chain crosses the membrane as a helical span at residues 80–100; sequence VTIFISNAWAVTNHFSIWLAA. At 101–125 the chain is on the cytoplasmic side; sequence SLSIFYLLKIVNFSRLIFHHLKRKA. The chain crosses the membrane as a helical span at residues 126–146; the sequence is KSVVLVIVLGSLFFLVCHLVM. At 147–178 the chain is on the extracellular side; it reads KSTYINVWTEEYEGNVTWKIKLRNAMHLSNLT. Residues N161 and N176 are each glycosylated (N-linked (GlcNAc...) asparagine). A helical membrane pass occupies residues 179–199; sequence VAMLANLIPFTLTLISFLLLI. Topologically, residues 200 to 229 are cytoplasmic; the sequence is YSLCKHLKKMQLHGKGSQDPSTKIHIKALQ. A helical membrane pass occupies residues 230 to 250; it reads TVTSFLILLAIYFLCLITSFW. Residues 251–259 are Extracellular-facing; the sequence is NSKMRPKEI. Residues 260–280 form a helical membrane-spanning segment; it reads VLMLCQAFGIIYPSFHSFILI. Topologically, residues 281–309 are cytoplasmic; sequence WGNKTLKQTFLSVLWRVTCWAKGQNQSTP.

It belongs to the G-protein coupled receptor T2R family.

It localises to the membrane. In terms of biological role, receptor that may play a role in the perception of bitterness and is gustducin-linked. May play a role in sensing the chemical composition of the gastrointestinal content. The activity of this receptor may stimulate alpha gustducin, mediate PLC-beta-2 activation and lead to the gating of TRPM5. The sequence is that of Taste receptor type 2 member 20 (TAS2R20) from Gorilla gorilla gorilla (Western lowland gorilla).